Here is a 179-residue protein sequence, read N- to C-terminus: UPF0303 protein P4H10.12 (179 aa).

This sequence belongs to the UPF0303 family.

The chain is UPF0303 protein P4H10.12 from Schizosaccharomyces pombe (strain 972 / ATCC 24843) (Fission yeast).